The primary structure comprises 122 residues: MITQIDRKAIRMKKHKRVRKSVFGTAERPRLAVFRSLNHIYAQVINDELGVTLATASSLDAEFKAAELAGGNVEGAKKVGDLVAKRALEKGVSKVVFDRGGNIYHGRIAAVAEAAREAGLEF.

It belongs to the universal ribosomal protein uL18 family. In terms of assembly, part of the 50S ribosomal subunit; part of the 5S rRNA/L5/L18/L25 subcomplex. Contacts the 5S and 23S rRNAs.

Its function is as follows. This is one of the proteins that bind and probably mediate the attachment of the 5S RNA into the large ribosomal subunit, where it forms part of the central protuberance. This is Large ribosomal subunit protein uL18 from Desulfitobacterium hafniense (strain Y51).